The sequence spans 391 residues: Serine protease 7 (391 aa).

A signal peptide spans 1 to 27 (MKSTRKVVGIFLATCLLPFTVLQNVAA). A propeptide spans 28 to 136 (QGSCRNPNQK…KCGPHSFSNK (109 aa)) (activation peptide). The Clip domain occupies 30–84 (SCRNPNQKQGQCLSIYDCQSLLSVIQQSYVSPEDRTFLRNSQCLDGVGRQPYVCC). Intrachain disulfides connect C31–C83, C41–C72, and C47–C84. Positions 91–121 (GSQEATSAAPPPTTTSSSSRGQDGQAGLGNL) are disordered. Disulfide bonds link C128-C264, C167-C183, C211-C216, C310-C327, and C337-C366. The Peptidase S1 domain maps to 137-390 (VYNGNDTAID…YMDWIVETIR (254 aa)). An N-linked (GlcNAc...) asparagine glycan is attached at N141. The active-site Charge relay system is H182. The Ca(2+) site is built by E202, D204, K207, and D210. D244 functions as the Charge relay system in the catalytic mechanism. Catalysis depends on S341, which acts as the Charge relay system.

This sequence belongs to the peptidase S1 family. CLIP subfamily. As to quaternary structure, interacts with Spn27A.

Its subcellular location is the secreted. Serine protease that, by cleaving and activating prophenoloxidase (PPO1) after immune challenge, plays an essential role in the melanization immune response to septic wounding. May function in diverse Hayan-dependent PPO1-activating cascades that are negatively controlled by different serpin proteins; Spn27A in the hemolymph and Spn77BA in the trachea. Important for the innate immune response to fungi. Regulation of melanization and PPO1 activation appears to be largely independent of the Toll signaling pathway. This Drosophila melanogaster (Fruit fly) protein is Serine protease 7.